A 147-amino-acid chain; its full sequence is Large ribosomal subunit protein uL15 (147 aa).

The tract at residues 1–58 (MKLHELKPAQGSTKAPKRLGRGIGSGTGKTSGKGHKGQKARAGGGVRPGFEGGQQPLA) is disordered. Gly residues-rich tracts occupy residues 21-31 (RGIGSGTGKTS) and 42-52 (AGGGVRPGFEG).

The protein belongs to the universal ribosomal protein uL15 family. Part of the 50S ribosomal subunit.

Its function is as follows. Binds to the 23S rRNA. The protein is Large ribosomal subunit protein uL15 of Desulfitobacterium hafniense (strain Y51).